The chain runs to 341 residues: Cell wall mannoprotein PIR1 (341 aa).

An N-terminal signal peptide occupies residues 1–18 (MQYKKSLVASALVATSLA). Positions 19–63 (AYAPKDPWSTLTPSATYKGGITDYSSTFGIAVEPIATTASSKAKR) are excised as a propeptide. PIR1/2/3 repeat units follow at residues 64 to 82 (AAAISQIGDGQIQATTKTT), 83 to 101 (AAAVSQIGDGQIQATTKTK), 102 to 125 (AAAVSQIGDGQIQATTKTTSAKTT), 126 to 144 (AAAVSQIGDGQIQATTKTK), 145 to 163 (AAAVSQIGDGQIQATTKTT), 164 to 182 (AAAVSQIGDGQIQATTKTT), 183 to 201 (AAAVSQIGDGQIQATTNTT), and 202 to 220 (VAPVSQITDGQIQATTLTS).

This sequence belongs to the PIR protein family. Post-translationally, covalently linked to beta-1,3-glucan of the inner cell wall layer via an alkali-sensitive ester linkage between the gamma-carboxyl group of glutamic acids, arising from specific glutamines within the PIR1/2/3 repeats, and hydroxyl groups of glucoses of beta-1,3-glucan chains. O-glycosylated. Extensively O-mannosylated.

It localises to the secreted. The protein resides in the cell wall. In terms of biological role, component of the outer cell wall layer. Required for stability of the cell wall and for optimal growth. Required for resistance against several antifungal and cell wall-perturbing agents and for tolerance to heat shock. The chain is Cell wall mannoprotein PIR1 (PIR1) from Saccharomyces cerevisiae (strain ATCC 204508 / S288c) (Baker's yeast).